Reading from the N-terminus, the 305-residue chain is MVLDGFAAYFDAYLENIVREGKSEHTVAAYRRDLEELFALLAQMPSEDAGGVPQDLSRRDFTAALRRLSQRGLDGRTLARKLSAWRQYCAWLVKRGLMRADPTADIKPPKQPERVPKALPQEWLNRMLDLPVDGGDPLAVRDHALFELMYGSGLRVSEIHGLNADDVYLDEAWVHVTGKGRKQRQVPLTGKSVEALKNYLPLRQTASDGKALFTGRNGTRLSQRQIQKRLESWAAQYGDGRHVSPHMMRHSYAGHLLQASRDIRAVQELLGHSSLSTTQIYTKLDFDHIARLYDEAHPRAKRQDE.

Residues 1–93 (MVLDGFAAYF…AWRQYCAWLV (93 aa)) enclose the Core-binding (CB) domain. A Tyr recombinase domain is found at 114-294 (RVPKALPQEW…DFDHIARLYD (181 aa)). Active-site residues include Arg155, Lys179, His246, Arg249, and His272. Residue Tyr281 is the O-(3'-phospho-DNA)-tyrosine intermediate of the active site.

The protein belongs to the 'phage' integrase family. XerC subfamily. In terms of assembly, forms a cyclic heterotetrameric complex composed of two molecules of XerC and two molecules of XerD.

The protein resides in the cytoplasm. Its function is as follows. Site-specific tyrosine recombinase, which acts by catalyzing the cutting and rejoining of the recombining DNA molecules. The XerC-XerD complex is essential to convert dimers of the bacterial chromosome into monomers to permit their segregation at cell division. It also contributes to the segregational stability of plasmids. The sequence is that of Tyrosine recombinase XerC from Neisseria gonorrhoeae (strain ATCC 700825 / FA 1090).